The primary structure comprises 671 residues: Acetyl-coenzyme A synthetase (671 aa).

Residues 1–21 (MPTASASESSSNQPESSNASG) are disordered. Residues 221 to 224 (RRGK), threonine 339, and asparagine 363 contribute to the CoA site. ATP contacts are provided by residues 415–417 (GEG), 439–444 (DTWWQT), aspartate 528, and arginine 543. Serine 551 serves as a coordination point for CoA. Residue arginine 554 participates in ATP binding. Valine 565, histidine 567, and valine 570 together coordinate Mg(2+). Arginine 611 contributes to the CoA binding site. An N6-acetyllysine modification is found at lysine 636.

This sequence belongs to the ATP-dependent AMP-binding enzyme family. Mg(2+) serves as cofactor. Post-translationally, acetylated. Deacetylation by the SIR2-homolog deacetylase activates the enzyme.

It carries out the reaction acetate + ATP + CoA = acetyl-CoA + AMP + diphosphate. Catalyzes the conversion of acetate into acetyl-CoA (AcCoA), an essential intermediate at the junction of anabolic and catabolic pathways. AcsA undergoes a two-step reaction. In the first half reaction, AcsA combines acetate with ATP to form acetyl-adenylate (AcAMP) intermediate. In the second half reaction, it can then transfer the acetyl group from AcAMP to the sulfhydryl group of CoA, forming the product AcCoA. The sequence is that of Acetyl-coenzyme A synthetase from Rhodopirellula baltica (strain DSM 10527 / NCIMB 13988 / SH1).